The primary structure comprises 811 residues: Auxin response factor 8 (811 aa).

Residues Phe126–Thr228 constitute a DNA-binding region (TF-B3). Disordered stretches follow at residues His467 to His496 and His544 to Thr565. Polar residues-rich tracts occupy residues Tyr469 to Leu482 and His544 to Pro555. Residues Lys705–Asp789 form the PB1 domain.

It belongs to the ARF family. In terms of assembly, homodimers and heterodimers. As to expression, expressed in the whole plant.

The protein resides in the nucleus. Its function is as follows. Auxin response factors (ARFs) are transcriptional factors that bind specifically to the DNA sequence 5'-TGTCTC-3' found in the auxin-responsive promoter elements (AuxREs). Seems to act as transcriptional activator. Formation of heterodimers with Aux/IAA proteins may alter their ability to modulate early auxin response genes expression. Regulates both stamen and gynoecium maturation. Promotes jasmonic acid production. Partially redundant with ARF6. Involved in fruit initiation. Acts as an inhibitor to stop further carpel development in the absence of fertilization and the generation of signals required to initiate fruit and seed development. This Arabidopsis thaliana (Mouse-ear cress) protein is Auxin response factor 8 (ARF8).